The chain runs to 217 residues: Octanoyltransferase (217 aa).

One can recognise a BPL/LPL catalytic domain in the interval 32 to 207 (SDSPDELWIV…TLSQLLGYQQ (176 aa)). Substrate is bound by residues 71–78 (RGGQVTYH), 138–140 (SLG), and 151–153 (GLA). Residue Cys-169 is the Acyl-thioester intermediate of the active site.

This sequence belongs to the LipB family.

It localises to the cytoplasm. It carries out the reaction octanoyl-[ACP] + L-lysyl-[protein] = N(6)-octanoyl-L-lysyl-[protein] + holo-[ACP] + H(+). The protein operates within protein modification; protein lipoylation via endogenous pathway; protein N(6)-(lipoyl)lysine from octanoyl-[acyl-carrier-protein]: step 1/2. Its function is as follows. Catalyzes the transfer of endogenously produced octanoic acid from octanoyl-acyl-carrier-protein onto the lipoyl domains of lipoate-dependent enzymes. Lipoyl-ACP can also act as a substrate although octanoyl-ACP is likely to be the physiological substrate. This chain is Octanoyltransferase, found in Shewanella sp. (strain MR-7).